Consider the following 642-residue polypeptide: Influenza virus NS1A-binding protein (642 aa).

The region spanning 1 to 131 is the BTB domain; the sequence is MIPNGYLMFE…GDYLLSRMDV (131 aa). In terms of domain architecture, BACK spans 132–350; that stretch reads TSCISYRNFA…MQQDELIEKP (219 aa). The tract at residues 164 to 368 is sufficient for AHR interaction and signaling; sequence ISEEEEFLKL…SGLGTAEMNG (205 aa). 5 positions are modified to phosphoserine: Ser246, Ser277, Ser322, Ser336, and Ser338. Residues 257–281 are disordered; that stretch reads KPPRENGHKQISSSSTGCLSSPNAT. The segment covering 265 to 281 has biased composition (polar residues); sequence KQISSSSTGCLSSPNAT. 6 Kelch repeats span residues 384-421, 432-469, 481-518, 527-565, 575-612, and 622-642; these read TVECYNPHTDHWSFLAPMRTPRARFQMAVLMGQLYVVG, CGEMYDSNIDDWIPVPELRTNRCNAGVCALNGKLYIVG, NCDVFDPVTKLWTSCAPLNIRRHQSAVCELGGYLYIIG, NTVERYNPENNTWTLIAPMNVARRGAGVAVLNGKLFVCG, CVEMYDPTRNEWKMMGNMTSPRSNAGIATVGNTIYAVG, and TVEVYNLESNEWSPYTKIFQF.

Belongs to the BTB-kelch protein family. In terms of assembly, homodimer; through the BTB domain. Interacts with AHR/Aryl hydrocarbon receptor. Interacts (via BACK domain) with pre-mRNA-binding protein HNRNPK; the interaction is direct. Interacts (via BACK domain) with splicing factor PTBP1; the interaction is direct. Interacts (via Kelch repeats) with RNA polymerase POLR2A (via C-terminal domain). Interacts (via BACK domain) with splicing factor SNRPA; the interaction is indirect. Interacts (via Kelch repeats) with splicing factor SART1. Interacts (via BACK domain) with ALYREF; the interaction is indirect and likely plays a role in mRNA nuclear export. Interacts (via Kelch repeats) with KLHL20 (via Kelch repeats); this interaction blocks the assembly of Cul3-KLHL20 complex. As to quaternary structure, (Microbial infection) Interacts (via BACK domain) with influenza A virus non-structural protein 1 (NS1); the interaction is direct and bridges the interaction between NS1 and HNRNPK.

The protein resides in the cytoplasm. The protein localises to the cytoskeleton. It localises to the nucleus. Its subcellular location is the nucleoplasm. Involved in many cell functions, including pre-mRNA splicing, the aryl hydrocarbon receptor (AHR) pathway, F-actin organization and protein ubiquitination. Plays a role in the dynamic organization of the actin skeleton as a stabilizer of actin filaments by association with F-actin through Kelch repeats. Protects cells from cell death induced by actin destabilization. Functions as modifier of the AHR/Aryl hydrocarbon receptor pathway increasing the concentration of AHR available to activate transcription. In addition, functions as a negative regulator of BCR(KLHL20) E3 ubiquitin ligase complex to prevent ubiquitin-mediated proteolysis of PML and DAPK1, two tumor suppressors. Inhibits pre-mRNA splicing (in vitro). May play a role in mRNA nuclear export. In terms of biological role, (Microbial infection) Involved in the alternative splicing of influenza A virus M1 mRNA through interaction with HNRNPK, thereby facilitating the generation of viral M2 protein. The BTB and Kelch domains are required for splicing activity. Promotes export of viral M mRNA and RNP via its interaction with mRNA export factor ALYREF. The polypeptide is Influenza virus NS1A-binding protein (Homo sapiens (Human)).